Consider the following 837-residue polypeptide: Striatin-interacting protein 1 (837 aa).

Met1 is subject to N-acetylmethionine. Disordered regions lie at residues 1–67 and 333–423; these read MEPA…ESPD and AASP…KGLP. Residues 18–35 show a composition bias toward pro residues; the sequence is PQPPPPPPPAAAQPPPGA. Positions 36–46 are enriched in low complexity; the sequence is PRAAAGLLPGG. The segment covering 47–60 has biased composition (basic and acidic residues); sequence KAREFNRNQRKDSE. Ser59, Ser335, and Ser339 each carry phosphoserine. The span at 356–377 shows a compositional bias: basic and acidic residues; the sequence is KALIKQDNLDAFNERDPYKADD. Acidic residues predominate over residues 378 to 391; it reads SREEEEENDDDNSL. Position 788 is a phosphoserine (Ser788). Residues 796-837 are required for STRIPAK core complex formation; sequence DNCLQSVLGQRVDLPEDFQMNYDLWLEREVFSKPISWEELLQ.

The protein belongs to the STRIP family. As to quaternary structure, part of the core of STRIPAK complexes composed of PP2A catalytic and scaffolding subunits, the striatins (PP2A regulatory subunits), the striatin-associated proteins MOB4, STRIP1 and STRIP2, PDCD10 and members of the STE20 kinases, such as STK24 and STK26. The STRIPAK complex can be extended by adapter proteins such as SLMAP:SIKE1, CTTNBP2 or CTTNBP2NL. Interacts with CDC42BPB. Interacts with CTTNBP2NL.

It is found in the cytoplasm. Its function is as follows. Plays a role in the regulation of cell morphology and cytoskeletal organization. Required in the cortical actin filament dynamics and cell shape. Part of the striatin-interacting phosphatase and kinase (STRIPAK) complexes. STRIPAK complexes have critical roles in protein (de)phosphorylation and are regulators of multiple signaling pathways including Hippo, MAPK, nuclear receptor and cytoskeleton remodeling. Different types of STRIPAK complexes are involved in a variety of biological processes such as cell growth, differentiation, apoptosis, metabolism and immune regulation. In Homo sapiens (Human), this protein is Striatin-interacting protein 1.